We begin with the raw amino-acid sequence, 465 residues long: Ribulose bisphosphate carboxylase large chain (465 aa).

N6,N6,N6-trimethyllysine is present on K4. Substrate-binding residues include N113 and T163. Residue K165 is the Proton acceptor of the active site. K167 provides a ligand contact to substrate. Residues K191, D193, and E194 each contribute to the Mg(2+) site. K191 is subject to N6-carboxylysine. H284 acts as the Proton acceptor in catalysis. The substrate site is built by R285, H317, and S369.

Belongs to the RuBisCO large chain family. Type I subfamily. In terms of assembly, heterohexadecamer of 8 large chains and 8 small chains. It depends on Mg(2+) as a cofactor.

Its subcellular location is the plastid. It is found in the chloroplast. The enzyme catalyses 2 (2R)-3-phosphoglycerate + 2 H(+) = D-ribulose 1,5-bisphosphate + CO2 + H2O. It carries out the reaction D-ribulose 1,5-bisphosphate + O2 = 2-phosphoglycolate + (2R)-3-phosphoglycerate + 2 H(+). In terms of biological role, ruBisCO catalyzes two reactions: the carboxylation of D-ribulose 1,5-bisphosphate, the primary event in carbon dioxide fixation, as well as the oxidative fragmentation of the pentose substrate in the photorespiration process. Both reactions occur simultaneously and in competition at the same active site. This chain is Ribulose bisphosphate carboxylase large chain, found in Sarracenia flava (Yellow pitcher plant).